The primary structure comprises 380 residues: Sialidase-2 (380 aa).

The FRIP motif signature appears at 20–23 (YRIP). Residues arginine 21 and arginine 41 each contribute to the substrate site. Aspartate 46 functions as the Proton acceptor in the catalytic mechanism. The BNR 1 repeat unit spans residues 127–138 (VTSTDHGRTWSS). 2 residues coordinate substrate: tyrosine 179 and tyrosine 181. The stretch at 197-208 (FLSHDHGRTWAR) is one BNR 2 repeat. Glutamate 218, arginine 237, and arginine 304 together coordinate substrate. The Nucleophile role is filled by tyrosine 334. Glutamate 355 is an active-site residue.

Belongs to the glycosyl hydrolase 33 family. Expressed in skeletal muscle, fetal liver and embryonic carcinoma cell line NT2-D1.

It is found in the cytoplasm. The protein resides in the cytosol. The catalysed reaction is Hydrolysis of alpha-(2-&gt;3)-, alpha-(2-&gt;6)-, alpha-(2-&gt;8)- glycosidic linkages of terminal sialic acid residues in oligosaccharides, glycoproteins, glycolipids, colominic acid and synthetic substrates.. It catalyses the reaction a ganglioside GD1a + H2O = a ganglioside GM1 + N-acetylneuraminate. It carries out the reaction a ganglioside GM1 + H2O = a ganglioside GA1 + N-acetylneuraminate. The enzyme catalyses a ganglioside GT1b + H2O = a ganglioside GD1b + N-acetylneuraminate. The catalysed reaction is a ganglioside GD1b + H2O = a ganglioside GM1 + N-acetylneuraminate. It catalyses the reaction a ganglioside GD3 + H2O = a ganglioside GM3 + N-acetylneuraminate. It carries out the reaction a ganglioside GM3 + H2O = a beta-D-galactosyl-(1-&gt;4)-beta-D-glucosyl-(1&lt;-&gt;1)-ceramide + N-acetylneuraminate. The enzyme catalyses a ganglioside GM2 + H2O = a ganglioside GA2 + N-acetylneuraminate. The catalysed reaction is a neolactoside IV(3)-alpha-NeuAc-nLc4Cer(d18:1(4E)) + H2O = a neolactoside nLc4Cer(d18:1(4E)) + N-acetylneuraminate. It catalyses the reaction N-acetyl-alpha-neuraminosyl-(2-&gt;3)-beta-D-galactosyl-(1-&gt;4)-D-glucose + H2O = lactose + N-acetylneuraminate. Its function is as follows. Exo-alpha-sialidase that catalyzes the hydrolytic cleavage of the terminal sialic acid (N-acetylneuraminic acid, Neu5Ac) of a glycan moiety in the catabolism of glycolipids, glycoproteins and oligosacharides. Recognizes sialyl linkage positions of the glycan moiety as well as the supramolecular organization of the sialoglycoconjugate. Displays preference for alpha-(2-&gt;3)-sialylated GD1a and GT1B gangliosides over alpha-(2-&gt;8)-sialylated GD1b, in both monomeric forms and micelles. Hydrolyzes monomeric GM1 ganglioside, but has no activity toward the miscellar form. Has lower sialidase activity for glycoproteins such as fetuin and TF/transferrin that carry a mixture of alpha-(2-&gt;3) and alpha-(2-&gt;6)-sialyl linkages. Cleaves milk oligosaccharide alpha-(2-&gt;3)-sialyllactose, but is inactive toward alpha-(2-&gt;6)-sialyllactose isomer. Has no activity toward colominic acid, a homomer of alpha-(2-&gt;8)-linked Neu5Ac residues. The polypeptide is Sialidase-2 (NEU2) (Homo sapiens (Human)).